The following is a 298-amino-acid chain: Lipoyl synthase (298 aa).

[4Fe-4S] cluster-binding residues include cysteine 40, cysteine 45, cysteine 51, cysteine 67, cysteine 71, cysteine 74, and serine 280. The region spanning 53 to 269 (AVRKTATFMI…KEIALSKGFS (217 aa)) is the Radical SAM core domain.

It belongs to the radical SAM superfamily. Lipoyl synthase family. It depends on [4Fe-4S] cluster as a cofactor.

The protein localises to the cytoplasm. It catalyses the reaction [[Fe-S] cluster scaffold protein carrying a second [4Fe-4S](2+) cluster] + N(6)-octanoyl-L-lysyl-[protein] + 2 oxidized [2Fe-2S]-[ferredoxin] + 2 S-adenosyl-L-methionine + 4 H(+) = [[Fe-S] cluster scaffold protein] + N(6)-[(R)-dihydrolipoyl]-L-lysyl-[protein] + 4 Fe(3+) + 2 hydrogen sulfide + 2 5'-deoxyadenosine + 2 L-methionine + 2 reduced [2Fe-2S]-[ferredoxin]. It functions in the pathway protein modification; protein lipoylation via endogenous pathway; protein N(6)-(lipoyl)lysine from octanoyl-[acyl-carrier-protein]. Catalyzes the radical-mediated insertion of two sulfur atoms into the C-6 and C-8 positions of the octanoyl moiety bound to the lipoyl domains of lipoate-dependent enzymes, thereby converting the octanoylated domains into lipoylated derivatives. This is Lipoyl synthase from Bacillus cereus (strain B4264).